We begin with the raw amino-acid sequence, 363 residues long: UDP-N-acetylenolpyruvoylglucosamine reductase (363 aa).

Positions 25-201 (IGPVARRMLT…RSAPVRYREL (177 aa)) constitute an FAD-binding PCMH-type domain. Arg-168 is an active-site residue. The Proton donor role is filled by Ser-249. Glu-352 is an active-site residue.

The protein belongs to the MurB family. FAD is required as a cofactor.

Its subcellular location is the cytoplasm. The catalysed reaction is UDP-N-acetyl-alpha-D-muramate + NADP(+) = UDP-N-acetyl-3-O-(1-carboxyvinyl)-alpha-D-glucosamine + NADPH + H(+). Its pathway is cell wall biogenesis; peptidoglycan biosynthesis. Functionally, cell wall formation. This chain is UDP-N-acetylenolpyruvoylglucosamine reductase, found in Mycolicibacterium smegmatis (strain ATCC 700084 / mc(2)155) (Mycobacterium smegmatis).